The following is a 567-amino-acid chain: Urease subunit alpha (567 aa).

The 439-residue stretch at 129 to 567 (GGIDTHIHFI…LPMAQRYFLF (439 aa)) folds into the Urease domain. Residues His134, His136, and Lys217 each contribute to the Ni(2+) site. Residue Lys217 is modified to N6-carboxylysine. Substrate is bound at residue His219. Ni(2+) contacts are provided by His246 and His272. The active-site Proton donor is the His320. Residue Asp360 coordinates Ni(2+).

Belongs to the metallo-dependent hydrolases superfamily. Urease alpha subunit family. As to quaternary structure, probable heterotrimer of UreA (gamma), UreB (beta) and UreC (alpha) subunits. Three heterotrimers associate to form the active enzyme. The trimeric urease interacts with an accessory complex composed of UreD, UreF and UreG, which is required for the assembly of the nickel containing metallocenter of UreC. The UreE protein may also play a direct role in nickel transfer to the urease apoprotein. The cofactor is Ni cation. Post-translationally, carboxylation allows a single lysine to coordinate two nickel ions.

Its subcellular location is the cytoplasm. The enzyme catalyses urea + 2 H2O + H(+) = hydrogencarbonate + 2 NH4(+). Its pathway is nitrogen metabolism; urea degradation; CO(2) and NH(3) from urea (urease route): step 1/1. The chain is Urease subunit alpha from Proteus mirabilis (strain HI4320).